Consider the following 115-residue polypeptide: NAD(P)H-quinone oxidoreductase subunit M (115 aa).

The protein belongs to the complex I NdhM subunit family. NDH-1 can be composed of about 15 different subunits; different subcomplexes with different compositions have been identified which probably have different functions.

It localises to the cellular thylakoid membrane. The enzyme catalyses a plastoquinone + NADH + (n+1) H(+)(in) = a plastoquinol + NAD(+) + n H(+)(out). It catalyses the reaction a plastoquinone + NADPH + (n+1) H(+)(in) = a plastoquinol + NADP(+) + n H(+)(out). Functionally, NDH-1 shuttles electrons from an unknown electron donor, via FMN and iron-sulfur (Fe-S) centers, to quinones in the respiratory and/or the photosynthetic chain. The immediate electron acceptor for the enzyme in this species is believed to be plastoquinone. Couples the redox reaction to proton translocation, and thus conserves the redox energy in a proton gradient. Cyanobacterial NDH-1 also plays a role in inorganic carbon-concentration. The sequence is that of NAD(P)H-quinone oxidoreductase subunit M from Prochlorococcus marinus (strain AS9601).